The primary structure comprises 463 residues: Lactadherin (463 aa).

Positions 1–22 (MQVSRVLAALCGMLLCASGLFA) are cleaved as a signal peptide. 2 consecutive EGF-like domains span residues 24 to 61 (SGDFCDSSLCLNGGTCLTGQDNDIYCLCPEGFTGLVCN) and 64 to 108 (ERGP…IHCE). 3 cysteine pairs are disulfide-bonded: Cys-28-Cys-39, Cys-33-Cys-49, and Cys-51-Cys-60. Asn-61 carries an N-linked (GlcNAc...) asparagine glycan. 6 disulfide bridges follow: Cys-68–Cys-79, Cys-73–Cys-96, Cys-98–Cys-107, Cys-148–Cys-303, Cys-290–Cys-294, and Cys-308–Cys-463. Positions 87 to 89 (RGD) match the Cell attachment site motif. 2 consecutive F5/8 type C domains span residues 148–303 (CSTQ…LLGC) and 308–463 (CSEP…LLGC). Asn-266 is a glycosylation site (N-linked (GlcNAc...) asparagine). 2 N-linked (GlcNAc...) asparagine glycosylation sites follow: Asn-316 and Asn-426.

Post-translationally, N-glycosylated. Isoform 1 also exists in both an O-glycosylated and a non-O-glycosylated form. Mammary epithelial cell surfaces and spermatozoan. Isoform 2 is present in brain, heart, kidney and spleen and at low levels in lung, liver, small intestine and testis.

It is found in the membrane. Its subcellular location is the secreted. The protein localises to the cytoplasmic vesicle. The protein resides in the secretory vesicle. It localises to the acrosome membrane. Contributes to phagocytic removal of apoptotic cells in many tissues. Specific ligand for the alpha-v/beta-3 and alpha-v/beta-5 receptors. Also binds to phosphatidylserine-enriched cell surfaces in a receptor-independent manner. Zona pellucida-binding protein which may play a role in gamete interaction. Plays an important role in the maintenance of intestinal epithelial homeostasis and the promotion of mucosal healing. Promotes VEGF-dependent neovascularization. The sequence is that of Lactadherin (Mfge8) from Mus musculus (Mouse).